The sequence spans 427 residues: Isocitrate dehydrogenase [NADP] (427 aa).

Thr-114 lines the NADP(+) pocket. D-threo-isocitrate-binding residues include Ser-123, Asn-125, Arg-129, Arg-139, and Arg-163. Residue Asp-317 participates in Mg(2+) binding. NADP(+) contacts are provided by residues 349-355 (HGTAPKY), Asn-362, Tyr-401, and Arg-405.

It belongs to the isocitrate and isopropylmalate dehydrogenases family. As to quaternary structure, homodimer. The cofactor is Mg(2+). It depends on Mn(2+) as a cofactor.

The catalysed reaction is D-threo-isocitrate + NADP(+) = 2-oxoglutarate + CO2 + NADPH. Its function is as follows. Catalyzes the oxidative decarboxylation of isocitrate to 2-oxoglutarate and carbon dioxide with the concomitant reduction of NADP(+). This Coxiella burnetii (strain RSA 493 / Nine Mile phase I) protein is Isocitrate dehydrogenase [NADP] (icd).